A 901-amino-acid polypeptide reads, in one-letter code: Protein translocase subunit SecA (901 aa).

ATP contacts are provided by residues Gln-87, 105–109, and Asp-512; that span reads GEGKT. Residues 852 to 901 form a disordered region; that stretch reads AQMQQLSHQSDDEAAAEDLAAQTGERKVGRNDPCPCGSGKKYKQCHGRLS. Cys-885, Cys-887, Cys-896, and His-897 together coordinate Zn(2+). The span at 891–901 shows a compositional bias: basic residues; sequence KKYKQCHGRLS.

The protein belongs to the SecA family. Monomer and homodimer. Part of the essential Sec protein translocation apparatus which comprises SecA, SecYEG and auxiliary proteins SecDF-YajC and YidC. Requires Zn(2+) as cofactor.

It is found in the cell inner membrane. Its subcellular location is the cytoplasm. The catalysed reaction is ATP + H2O + cellular proteinSide 1 = ADP + phosphate + cellular proteinSide 2.. Its function is as follows. Part of the Sec protein translocase complex. Interacts with the SecYEG preprotein conducting channel. Has a central role in coupling the hydrolysis of ATP to the transfer of proteins into and across the cell membrane, serving both as a receptor for the preprotein-SecB complex and as an ATP-driven molecular motor driving the stepwise translocation of polypeptide chains across the membrane. The protein is Protein translocase subunit SecA of Klebsiella pneumoniae (strain 342).